The primary structure comprises 253 residues: Sugar fermentation stimulation protein homolog (253 aa).

Belongs to the SfsA family.

This is Sugar fermentation stimulation protein homolog from Prochlorococcus marinus (strain NATL1A).